We begin with the raw amino-acid sequence, 354 residues long: Ribosomal RNA large subunit methyltransferase M (354 aa).

S-adenosyl-L-methionine is bound by residues Ser-183, Ser-216–Gly-219, Asp-235, Asp-255, and Asp-271. The active-site Proton acceptor is the Lys-300.

The protein belongs to the class I-like SAM-binding methyltransferase superfamily. RNA methyltransferase RlmE family. RlmM subfamily. Monomer.

Its subcellular location is the cytoplasm. The catalysed reaction is cytidine(2498) in 23S rRNA + S-adenosyl-L-methionine = 2'-O-methylcytidine(2498) in 23S rRNA + S-adenosyl-L-homocysteine + H(+). Catalyzes the 2'-O-methylation at nucleotide C2498 in 23S rRNA. The chain is Ribosomal RNA large subunit methyltransferase M from Pseudomonas putida (strain ATCC 47054 / DSM 6125 / CFBP 8728 / NCIMB 11950 / KT2440).